Consider the following 149-residue polypeptide: Nucleoside diphosphate kinase 1 (149 aa).

Positions 9, 57, 85, 91, 102, and 112 each coordinate ATP. The Pros-phosphohistidine intermediate role is filled by H115.

As to quaternary structure, homohexamer. Mg(2+) is required as a cofactor.

The enzyme catalyses a 2'-deoxyribonucleoside 5'-diphosphate + ATP = a 2'-deoxyribonucleoside 5'-triphosphate + ADP. It carries out the reaction a ribonucleoside 5'-diphosphate + ATP = a ribonucleoside 5'-triphosphate + ADP. In terms of biological role, major role in the synthesis of nucleoside triphosphates other than ATP. The ATP gamma phosphate is transferred to the NDP beta phosphate via a ping-pong mechanism, using a phosphorylated active-site intermediate. This NDK is microtubule-associated. In Oryza sativa subsp. indica (Rice), this protein is Nucleoside diphosphate kinase 1 (NDKR).